Reading from the N-terminus, the 339-residue chain is Fructose-1,6-bisphosphatase class 1 (339 aa).

Mg(2+) contacts are provided by Glu92, Asp114, Leu116, and Asp117. Substrate contacts are provided by residues 117–120, Asn209, and Lys275; that span reads DGSS. Mg(2+) is bound at residue Glu281.

The protein belongs to the FBPase class 1 family. As to quaternary structure, homotetramer. Mg(2+) serves as cofactor.

Its subcellular location is the cytoplasm. The enzyme catalyses beta-D-fructose 1,6-bisphosphate + H2O = beta-D-fructose 6-phosphate + phosphate. It participates in carbohydrate biosynthesis; gluconeogenesis. The polypeptide is Fructose-1,6-bisphosphatase class 1 (Acidithiobacillus ferrooxidans (strain ATCC 53993 / BNL-5-31) (Leptospirillum ferrooxidans (ATCC 53993))).